Consider the following 1313-residue polypeptide: Envelopment polyprotein (1313 aa).

The first 17 residues, 1–17, serve as a signal peptide directing secretion; that stretch reads MIFTILNVLTRAMLVMS. Residues 18–712 lie on the Lumenal side of the membrane; it reads MYSLTTWDST…HSTLSAILTS (695 aa). N-linked (GlcNAc...) asparagine; by host glycosylation is found at Asn76 and Asn102. The stretch at 178 to 237 forms a coiled coil; it reads MQVLMSEIEQLKNQLSKKRNERGQEKRDAEKVMSDLMARNSDLRKHNDILTAEISQMKNK. An internal signal sequence for glycoprotein N region spans residues 250–270; sequence TVVPAILSVALLSSSVAPIIA. 12 disulfide bridges follow: Cys303-Cys312, Cys352-Cys362, Cys373-Cys404, Cys394-Cys407, Cys432-Cys579, Cys450-Cys460, Cys501-Cys557, Cys525-Cys536, Cys543-Cys548, Cys602-Cys605, Cys609-Cys679, and Cys629-Cys634. A glycan (N-linked (GlcNAc...) asparagine; by host) is linked at Asn496. Residues 713–733 form a helical membrane-spanning segment; sequence FLLILFIYTVFSVTTNILYVL. The golgi retention signal stretch occupies residues 731-773; that stretch reads YVLRLIPKQLKSPVGWLKLFINWLLTALRIKTRNVMRRINQRI. Topologically, residues 734–791 are cytoplasmic; it reads RLIPKQLKSPVGWLKLFINWLLTALRIKTRNVMRRINQRIGWVDHHDVERPRHREPMR. The important for correct targeting of the glycoproteins to the Golgi complex but not for heterodimerization stretch occupies residues 769-773; the sequence is INQRI. Positions 793–809 are internal signal sequence for glycoprotein C; the sequence is FKTTLLLTLIMMTGGNA. Intrachain disulfides connect Cys810–Cys850, Cys823–Cys832, Cys875–Cys971, Cys890–Cys1084, Cys896–Cys944, Cys902–Cys951, Cys907–Cys933, Cys937–Cys942, Cys1053–Cys1066, Cys1148–Cys1220, Cys1158–Cys1161, and Cys1168–Cys1202. Residues 810–1278 lie on the Lumenal side of the membrane; that stretch reads CSNTVVANSK…LDWLGGPMKA (469 aa). The fusion loop stretch occupies residues 896–902; that stretch reads CHLVGDC. Residues 938–949 are fusion loop; the sequence is GAIGCGCFNINP. N-linked (GlcNAc...) asparagine; by host glycosylation is present at Asn1154. Asn1243 carries N-linked (GlcNAc...) asparagine; by host glycosylation. The chain crosses the membrane as a helical span at residues 1279-1299; the sequence is ILKILGFIAIGIVCFVLFMIL. At 1300–1313 the chain is on the cytoplasmic side; the sequence is IRIAVNSINIKKKN.

Belongs to the phlebovirus envelope glycoprotein family. Heterodimer with glycoprotein C. Interacts with nucleocapsid protein N and with the polymerase L in order to package them into virus particles. In terms of assembly, heterodimer with glycoprotein C. Homotrimer (postfusion). Interacts with nucleocapsid protein N and with the polymerase L in order to package them into virus particles. Interacts with host E3 ubiquitin-protein ligase UBR4; this interaction is important for viral RNA production. In terms of processing, specific enzymatic cleavages in vivo yield mature proteins including NSm protein, Glycoprotein C, and Glycoprotein N. Glycosylated. The glycans can attach to host CD209/DC-SIGN, and may play a role in virus entry into dendritic cells. Post-translationally, palmitoylated.

It is found in the virion membrane. Its subcellular location is the host Golgi apparatus membrane. The protein resides in the host endoplasmic reticulum membrane. Structural component of the virion that interacts with glycoprotein C. It shields the hydrophobic fusion loops of the glycoprotein C, preventing premature fusion. The glycoprotein protrusions are arranged on an icosahedral lattice, with T=12 triangulation. They are able to attach the virion to the host cell receptor CD209/DC-SIGN and to promote fusion of membranes with the late endosome after endocytosis of the virion. Plays a role in the packaging of ribonucleoproteins and polymerase during virus assembly. In terms of biological role, structural component of the virion that interacts with glycoprotein N. Acts as a class II fusion protein that is activated upon acidification and subsequent repositioning of the glycoprotein N. The glycoprotein protrusions are arranged on an icosahedral lattice, with T=12 triangulation. They are able to attach the virion to the host cell receptor CD209/DC-SIGN and to promote fusion of membranes with the late endosome after endocytosis of the virion. Functionally, plays a role for virus dissemination in mosquitoes. This is Envelopment polyprotein (GP) from Homo sapiens (Human).